A 492-amino-acid chain; its full sequence is Bifunctional protein GlmU (492 aa).

Residues 1–241 (MTFRGDTAVL…NALVAGVNNR (241 aa)) are pyrophosphorylase. UDP-N-acetyl-alpha-D-glucosamine contacts are provided by residues 12-15 (LAAG), Lys26, Gln83, 88-89 (GT), 112-114 (SGD), Gly151, Glu166, Asn181, and Asn239. Residue Asp114 participates in Mg(2+) binding. Mg(2+) is bound at residue Asn239. A linker region spans residues 242–262 (VQLAELSAELNRRIVATHQVA). An N-acetyltransferase region spans residues 263 to 492 (GVTIIDPATT…KQSQQKSEPD (230 aa)). Positions 344 and 362 each coordinate UDP-N-acetyl-alpha-D-glucosamine. The Proton acceptor role is filled by His374. UDP-N-acetyl-alpha-D-glucosamine contacts are provided by Tyr377 and Asn388. Residues Ala391, 397–398 (NY), Ser416, and Ala434 contribute to the acetyl-CoA site. The segment at 461-492 (VQRKRPGSAAAQAAEKASTRTGKQSQQKSEPD) is disordered. Residues 479–492 (TRTGKQSQQKSEPD) are compositionally biased toward polar residues.

It in the N-terminal section; belongs to the N-acetylglucosamine-1-phosphate uridyltransferase family. This sequence in the C-terminal section; belongs to the transferase hexapeptide repeat family. In terms of assembly, homotrimer. Requires Mg(2+) as cofactor.

Its subcellular location is the cytoplasm. The catalysed reaction is alpha-D-glucosamine 1-phosphate + acetyl-CoA = N-acetyl-alpha-D-glucosamine 1-phosphate + CoA + H(+). The enzyme catalyses N-acetyl-alpha-D-glucosamine 1-phosphate + UTP + H(+) = UDP-N-acetyl-alpha-D-glucosamine + diphosphate. Its pathway is nucleotide-sugar biosynthesis; UDP-N-acetyl-alpha-D-glucosamine biosynthesis; N-acetyl-alpha-D-glucosamine 1-phosphate from alpha-D-glucosamine 6-phosphate (route II): step 2/2. The protein operates within nucleotide-sugar biosynthesis; UDP-N-acetyl-alpha-D-glucosamine biosynthesis; UDP-N-acetyl-alpha-D-glucosamine from N-acetyl-alpha-D-glucosamine 1-phosphate: step 1/1. It functions in the pathway bacterial outer membrane biogenesis; LPS lipid A biosynthesis. In terms of biological role, catalyzes the last two sequential reactions in the de novo biosynthetic pathway for UDP-N-acetylglucosamine (UDP-GlcNAc). The C-terminal domain catalyzes the transfer of acetyl group from acetyl coenzyme A to glucosamine-1-phosphate (GlcN-1-P) to produce N-acetylglucosamine-1-phosphate (GlcNAc-1-P), which is converted into UDP-GlcNAc by the transfer of uridine 5-monophosphate (from uridine 5-triphosphate), a reaction catalyzed by the N-terminal domain. In Mycobacterium leprae (strain Br4923), this protein is Bifunctional protein GlmU.